Here is a 149-residue protein sequence, read N- to C-terminus: MEVILLDKIAHLGDLGDKVVVKSGFARNYLFPQGKAVMATKDNLAAFEARRAELEAKLADVLAAAEARAAQLSALTNVTIATKAGDEGKLFGSVGTRDIADAITAAGVPVAKSEVRMPNGVLRSVGEYDIVVHLHTDVNTTVKVTVVAE.

The protein belongs to the bacterial ribosomal protein bL9 family.

Binds to the 23S rRNA. This chain is Large ribosomal subunit protein bL9, found in Tolumonas auensis (strain DSM 9187 / NBRC 110442 / TA 4).